The primary structure comprises 456 residues: tRNA modification GTPase MnmE (456 aa).

3 residues coordinate (6S)-5-formyl-5,6,7,8-tetrahydrofolate: R25, E82, and K121. The region spanning 217 to 379 is the TrmE-type G domain; that stretch reads GIKVVIIGKP…LLDEIVKIAG (163 aa). N227 lines the K(+) pocket. Residues 227-232, 246-252, and 271-274 each bind GTP; these read NAGKSS, TDIAGTT, and DTAG. A Mg(2+)-binding site is contributed by S231. Residues T246, I248, and T251 each contribute to the K(+) site. T252 is a binding site for Mg(2+). K456 contacts (6S)-5-formyl-5,6,7,8-tetrahydrofolate.

The protein belongs to the TRAFAC class TrmE-Era-EngA-EngB-Septin-like GTPase superfamily. TrmE GTPase family. As to quaternary structure, homodimer. Heterotetramer of two MnmE and two MnmG subunits. K(+) is required as a cofactor.

It localises to the cytoplasm. Functionally, exhibits a very high intrinsic GTPase hydrolysis rate. Involved in the addition of a carboxymethylaminomethyl (cmnm) group at the wobble position (U34) of certain tRNAs, forming tRNA-cmnm(5)s(2)U34. The chain is tRNA modification GTPase MnmE from Endomicrobium trichonymphae.